The following is a 141-amino-acid chain: GTP cyclohydrolase-2 (141 aa).

1–3 lines the GTP pocket; that stretch reads HSE. Zn(2+) contacts are provided by Cys4, Cys15, and Cys17. GTP contacts are provided by residues Gln20, 41–43, and Thr63; that span reads EGR. Asp75 functions as the Proton acceptor in the catalytic mechanism. The active-site Nucleophile is Arg77. Thr98 and Lys103 together coordinate GTP.

It belongs to the GTP cyclohydrolase II family. Zn(2+) is required as a cofactor.

It catalyses the reaction GTP + 4 H2O = 2,5-diamino-6-hydroxy-4-(5-phosphoribosylamino)-pyrimidine + formate + 2 phosphate + 3 H(+). It functions in the pathway cofactor biosynthesis; riboflavin biosynthesis; 5-amino-6-(D-ribitylamino)uracil from GTP: step 1/4. In terms of biological role, catalyzes the conversion of GTP to 2,5-diamino-6-ribosylamino-4(3H)-pyrimidinone 5'-phosphate (DARP), formate and pyrophosphate. This Sulfurospirillum multivorans (Dehalospirillum multivorans) protein is GTP cyclohydrolase-2 (ribA).